The primary structure comprises 750 residues: Tegument protein UL46 homolog (750 aa).

Disordered stretches follow at residues 437–484, 525–593, 610–669, and 692–750; these read FCCP…SPRT, QRSD…DYMR, YTPY…EVVY, and SASR…VSSL. Residues 465–484 show a composition bias toward polar residues; it reads LRSSRQLPTSPPSNIVSPRT. Low complexity predominate over residues 528 to 540; that stretch reads DSSSSDNSTCSST. Residues 541 to 553 are compositionally biased toward polar residues; it reads ETQYITLPSTPSP. Composition is skewed to basic and acidic residues over residues 710 to 727 and 739 to 750; these read VCRE…DGFI and KHPDQTERVSSL.

This sequence belongs to the herpesviridae HHV-1 VP11/12 protein family.

The protein localises to the virion tegument. It is found in the host cell membrane. In terms of biological role, modulates alpha trans-inducing factor-dependent activation of alpha genes. This is Tegument protein UL46 homolog from Equine herpesvirus 1 (strain V592) (EHV-1).